A 652-amino-acid polypeptide reads, in one-letter code: Putative asparagine synthetase [glutamine-hydrolyzing] (652 aa).

The active-site For GATase activity is the Cys2. One can recognise a Glutamine amidotransferase type-2 domain in the interval 2–231 (CGLLAFVAAP…SGCFARIRAD (230 aa)). Residues 60 to 64 (RLSII), 89 to 91 (NGE), and Asp115 contribute to the L-glutamine site. 382-383 (SG) is a binding site for ATP.

This sequence belongs to the asparagine synthetase family.

The catalysed reaction is L-aspartate + L-glutamine + ATP + H2O = L-asparagine + L-glutamate + AMP + diphosphate + H(+). The protein operates within amino-acid biosynthesis; L-asparagine biosynthesis; L-asparagine from L-aspartate (L-Gln route): step 1/1. The sequence is that of Putative asparagine synthetase [glutamine-hydrolyzing] (asnB) from Mycobacterium bovis (strain ATCC BAA-935 / AF2122/97).